The chain runs to 220 residues: Ribose-5-phosphate isomerase A (220 aa).

Residues threonine 28–threonine 31, aspartate 81–aspartate 84, and lysine 94–glycine 97 contribute to the substrate site. Glutamate 103 functions as the Proton acceptor in the catalytic mechanism. Residue lysine 121 participates in substrate binding.

It belongs to the ribose 5-phosphate isomerase family. As to quaternary structure, homodimer.

It carries out the reaction aldehydo-D-ribose 5-phosphate = D-ribulose 5-phosphate. The protein operates within carbohydrate degradation; pentose phosphate pathway; D-ribose 5-phosphate from D-ribulose 5-phosphate (non-oxidative stage): step 1/1. Functionally, catalyzes the reversible conversion of ribose-5-phosphate to ribulose 5-phosphate. The polypeptide is Ribose-5-phosphate isomerase A (Shewanella putrefaciens (strain CN-32 / ATCC BAA-453)).